Consider the following 379-residue polypeptide: uncharacterized protein (379 aa).

This is an uncharacterized protein from Sinorhizobium fredii (strain NBRC 101917 / NGR234).